The primary structure comprises 203 residues: Outer-membrane lipoprotein carrier protein (203 aa).

An N-terminal signal peptide occupies residues 1-20; the sequence is MRRGRVWLAALCLAAGAAHA.

Belongs to the LolA family. In terms of assembly, monomer.

The protein resides in the periplasm. Its function is as follows. Participates in the translocation of lipoproteins from the inner membrane to the outer membrane. Only forms a complex with a lipoprotein if the residue after the N-terminal Cys is not an aspartate (The Asp acts as a targeting signal to indicate that the lipoprotein should stay in the inner membrane). This is Outer-membrane lipoprotein carrier protein from Methylibium petroleiphilum (strain ATCC BAA-1232 / LMG 22953 / PM1).